The following is a 618-amino-acid chain: Sphingomyelin phosphodiesterase 2 (618 aa).

Residues 1–22 (MQQPLIILGIGIVLALVSNVES) form the signal peptide. One can recognise a Saposin B-type domain in the interval 68-151 (RKMSCLFCTF…AFIANCGHSD (84 aa)). Intrachain disulfides connect Cys72–Cys147, Cys75–Cys140, and Cys103–Cys114. Residue Asn89 is glycosylated (N-linked (GlcNAc...) asparagine). Asn159 carries N-linked (GlcNAc...) asparagine glycosylation. Positions 189 and 191 each coordinate Zn(2+). 2 cysteine pairs are disulfide-bonded: Cys204–Cys216 and Cys217–Cys249. Residue Asp278 participates in Zn(2+) binding. N-linked (GlcNAc...) asparagine glycosylation is present at Asn298. 4 residues coordinate Zn(2+): Asn318, His427, His461, and His463. The cysteines at positions 387 and 435 are disulfide-linked. N-linked (GlcNAc...) asparagine glycans are attached at residues Asn525 and Asn568. Disulfide bonds link Cys588/Cys594 and Cys600/Cys613.

This sequence belongs to the acid sphingomyelinase family. It depends on Zn(2+) as a cofactor.

It is found in the secreted. It catalyses the reaction a sphingomyelin + H2O = phosphocholine + an N-acylsphing-4-enine + H(+). The catalysed reaction is an N-acyl-15-methylhexadecasphing-4-enine-1-phosphocholine + H2O = an N-acyl-15-methylhexadecasphing-4-enine + phosphocholine + H(+). It functions in the pathway lipid metabolism; sphingolipid metabolism. Its function is as follows. Sphingomyelin phosphodiesterase (sphingomyelinase) that converts sphingomyelin (N-acyl-sphingoid-1-phosphocholine) to ceramide (N-acyl-sphingoid base) and phosphocholine at acidic pH. Displays its enzymatic activity when secreted. May play distinct roles in signaling. The chain is Sphingomyelin phosphodiesterase 2 (asm-2) from Caenorhabditis elegans.